Here is a 130-residue protein sequence, read N- to C-terminus: Small ribosomal subunit protein uS11 (130 aa).

It belongs to the universal ribosomal protein uS11 family. As to quaternary structure, part of the 30S ribosomal subunit. Interacts with proteins S7 and S18. Binds to IF-3.

Its function is as follows. Located on the platform of the 30S subunit, it bridges several disparate RNA helices of the 16S rRNA. Forms part of the Shine-Dalgarno cleft in the 70S ribosome. This chain is Small ribosomal subunit protein uS11, found in Helicobacter hepaticus (strain ATCC 51449 / 3B1).